A 369-amino-acid polypeptide reads, in one-letter code: GTPase Obg (369 aa).

Residues 1-159 (MKFIDEAKIE…RELRLELKVL (159 aa)) enclose the Obg domain. Positions 128-148 (IHFKSSTNRAPRQKSEGKEGE) are disordered. An OBG-type G domain is found at 160-333 (ADIGLLGMPN…LVTEIYDYIA (174 aa)). GTP is bound by residues 166–173 (GMPNAGKS), 191–195 (FTTLH), 213–216 (DIPG), 283–286 (NKLD), and 314–316 (SAL). Mg(2+) is bound by residues serine 173 and threonine 193.

The protein belongs to the TRAFAC class OBG-HflX-like GTPase superfamily. OBG GTPase family. As to quaternary structure, monomer. Requires Mg(2+) as cofactor.

It localises to the cytoplasm. In terms of biological role, an essential GTPase which binds GTP, GDP and possibly (p)ppGpp with moderate affinity, with high nucleotide exchange rates and a fairly low GTP hydrolysis rate. Plays a role in control of the cell cycle, stress response, ribosome biogenesis and in those bacteria that undergo differentiation, in morphogenesis control. In Herminiimonas arsenicoxydans, this protein is GTPase Obg.